Consider the following 249-residue polypeptide: uncharacterized protein (249 aa).

11 to 34 provides a ligand contact to NADP(+); sequence IFGGRSQIGGELARRLAAGATMVL. Substrate is bound at residue S142. The Proton acceptor role is filled by Y155.

This sequence belongs to the short-chain dehydrogenases/reductases (SDR) family.

This is an uncharacterized protein from Mycobacterium tuberculosis (strain CDC 1551 / Oshkosh).